The primary structure comprises 241 residues: Ribonuclease PH (241 aa).

Residues Arg90 and 128-130 each bind phosphate; that span reads GTR.

The protein belongs to the RNase PH family. In terms of assembly, homohexameric ring arranged as a trimer of dimers.

The enzyme catalyses tRNA(n+1) + phosphate = tRNA(n) + a ribonucleoside 5'-diphosphate. In terms of biological role, phosphorolytic 3'-5' exoribonuclease that plays an important role in tRNA 3'-end maturation. Removes nucleotide residues following the 3'-CCA terminus of tRNAs; can also add nucleotides to the ends of RNA molecules by using nucleoside diphosphates as substrates, but this may not be physiologically important. Probably plays a role in initiation of 16S rRNA degradation (leading to ribosome degradation) during starvation. This is Ribonuclease PH from Corynebacterium diphtheriae (strain ATCC 700971 / NCTC 13129 / Biotype gravis).